The sequence spans 146 residues: Ribonuclease H (146 aa).

The 143-residue stretch at Met1–Lys143 folds into the RNase H type-1 domain. 4 residues coordinate Mg(2+): Asp10, Glu48, Asp70, and Asp135.

It belongs to the RNase H family. In terms of assembly, monomer. Requires Mg(2+) as cofactor.

The protein localises to the cytoplasm. The catalysed reaction is Endonucleolytic cleavage to 5'-phosphomonoester.. Endonuclease that specifically degrades the RNA of RNA-DNA hybrids. The chain is Ribonuclease H from Prosthecochloris aestuarii (strain DSM 271 / SK 413).